We begin with the raw amino-acid sequence, 207 residues long: Protein YABBY 6 (207 aa).

The C4-type zinc finger occupies cysteine 16–cysteine 43.

This sequence belongs to the YABBY family. In terms of tissue distribution, expressed in leaf blades, leaf sheaths and flowers.

It is found in the nucleus. The sequence is that of Protein YABBY 6 (YAB6) from Oryza sativa subsp. japonica (Rice).